We begin with the raw amino-acid sequence, 107 residues long: U1-lycotoxin-Ls1s (107 aa).

The N-terminal stretch at 1 to 20 (MMKVLVVVALLVTLISYSSS) is a signal peptide. Residues 21–41 (EGIDDLEADELLSLMANEQTR) constitute a propeptide that is removed on maturation. 4 disulfides stabilise this stretch: C44-C59, C51-C68, C58-C86, and C70-C84.

Belongs to the neurotoxin 19 (CSTX) family. 04 (U1-Lctx) subfamily. As to expression, expressed by the venom gland.

Its subcellular location is the secreted. The polypeptide is U1-lycotoxin-Ls1s (Lycosa singoriensis (Wolf spider)).